The following is a 144-amino-acid chain: Crossover junction endodeoxyribonuclease Hjc (144 aa).

Position 12 (Glu-12) interacts with Mg(2+). Ser-32 is an active-site residue. Mg(2+) contacts are provided by Asp-42 and Glu-55.

It belongs to the Holliday junction resolvase Hjc family. In terms of assembly, homodimer; forms a 2:1 complex with Hel308 (Hjm). May form a complex with Holliday junction DNA, Hjc and Hjm. Requires Mg(2+) as cofactor.

It carries out the reaction Endonucleolytic cleavage at a junction such as a reciprocal single-stranded crossover between two homologous DNA duplexes (Holliday junction).. Its activity is regulated as follows. Cleavage stimulated by PCNA123 and PCNA323 and by RadC2. Functionally, a structure-specific endonuclease that resolves Holliday junction (HJ) intermediates during genetic recombination. Cleaves 4-way DNA junctions introducing paired nicks in opposing strands, leaving a 5'-terminal phosphate and a 3'-terminal hydroxyl group that are subsequently ligated to produce recombinant products. Inhibits the helicase activity of Hel308 (Hjm). This chain is Crossover junction endodeoxyribonuclease Hjc, found in Sulfurisphaera tokodaii (strain DSM 16993 / JCM 10545 / NBRC 100140 / 7) (Sulfolobus tokodaii).